A 161-amino-acid chain; its full sequence is 3-isopropylmalate dehydratase small subunit 1 (161 aa).

Belongs to the LeuD family. LeuD type 2 subfamily. In terms of assembly, heterodimer of LeuC and LeuD.

It catalyses the reaction (2R,3S)-3-isopropylmalate = (2S)-2-isopropylmalate. The protein operates within amino-acid biosynthesis; L-leucine biosynthesis; L-leucine from 3-methyl-2-oxobutanoate: step 2/4. Catalyzes the isomerization between 2-isopropylmalate and 3-isopropylmalate, via the formation of 2-isopropylmaleate. This Archaeoglobus fulgidus (strain ATCC 49558 / DSM 4304 / JCM 9628 / NBRC 100126 / VC-16) protein is 3-isopropylmalate dehydratase small subunit 1 (leuD1).